Consider the following 244-residue polypeptide: Phosphoadenosine 5'-phosphosulfate reductase (244 aa).

The Nucleophile; cysteine thiosulfonate intermediate role is filled by cysteine 239.

The protein belongs to the PAPS reductase family. CysH subfamily.

It is found in the cytoplasm. It carries out the reaction [thioredoxin]-disulfide + sulfite + adenosine 3',5'-bisphosphate + 2 H(+) = [thioredoxin]-dithiol + 3'-phosphoadenylyl sulfate. Its pathway is sulfur metabolism; hydrogen sulfide biosynthesis; sulfite from sulfate: step 3/3. In terms of biological role, catalyzes the formation of sulfite from phosphoadenosine 5'-phosphosulfate (PAPS) using thioredoxin as an electron donor. This is Phosphoadenosine 5'-phosphosulfate reductase from Escherichia coli O6:K15:H31 (strain 536 / UPEC).